The sequence spans 293 residues: Homoserine kinase (293 aa).

An ATP-binding site is contributed by 83 to 93 (PITRGMGSSSA).

This sequence belongs to the GHMP kinase family. Homoserine kinase subfamily.

The protein localises to the cytoplasm. It carries out the reaction L-homoserine + ATP = O-phospho-L-homoserine + ADP + H(+). Its pathway is amino-acid biosynthesis; L-threonine biosynthesis; L-threonine from L-aspartate: step 4/5. Functionally, catalyzes the ATP-dependent phosphorylation of L-homoserine to L-homoserine phosphate. This is Homoserine kinase from Helicobacter pylori (strain ATCC 700392 / 26695) (Campylobacter pylori).